Consider the following 79-residue polypeptide: Sec-independent protein translocase protein TatA (79 aa).

Residues 1–21 (MGSLSIWHWIVVIAVVLLLFG) form a helical membrane-spanning segment. The segment covering 42 to 60 (GLQDDEKTAEKPDAVKSLD) has biased composition (basic and acidic residues). Positions 42–79 (GLQDDEKTAEKPDAVKSLDHNATTGTPPNRTDVGSKAV) are disordered. Polar residues predominate over residues 61-70 (HNATTGTPPN).

The protein belongs to the TatA/E family. As to quaternary structure, the Tat system comprises two distinct complexes: a TatABC complex, containing multiple copies of TatA, TatB and TatC subunits, and a separate TatA complex, containing only TatA subunits. Substrates initially bind to the TatABC complex, which probably triggers association of the separate TatA complex to form the active translocon.

Its subcellular location is the cell inner membrane. Its function is as follows. Part of the twin-arginine translocation (Tat) system that transports large folded proteins containing a characteristic twin-arginine motif in their signal peptide across membranes. TatA could form the protein-conducting channel of the Tat system. In Rhodopseudomonas palustris (strain HaA2), this protein is Sec-independent protein translocase protein TatA.